We begin with the raw amino-acid sequence, 342 residues long: Ribosomal RNA small subunit methyltransferase C (342 aa).

This sequence belongs to the methyltransferase superfamily. RsmC family. In terms of assembly, monomer.

Its subcellular location is the cytoplasm. The catalysed reaction is guanosine(1207) in 16S rRNA + S-adenosyl-L-methionine = N(2)-methylguanosine(1207) in 16S rRNA + S-adenosyl-L-homocysteine + H(+). Its function is as follows. Specifically methylates the guanine in position 1207 of 16S rRNA in the 30S particle. The chain is Ribosomal RNA small subunit methyltransferase C from Shewanella sp. (strain MR-7).